The chain runs to 242 residues: Uridylate kinase (242 aa).

11-14 (KLSG) is an ATP binding site. The tract at residues 19–24 (GDKGVG) is involved in allosteric activation by GTP. UMP is bound at residue Gly53. Gly54 and Arg58 together coordinate ATP. UMP-binding positions include Asp73 and 134–141 (IGSPYFST). ATP-binding residues include Asn162, Tyr168, and Asp171.

The protein belongs to the UMP kinase family. As to quaternary structure, homohexamer.

It localises to the cytoplasm. The enzyme catalyses UMP + ATP = UDP + ADP. It participates in pyrimidine metabolism; CTP biosynthesis via de novo pathway; UDP from UMP (UMPK route): step 1/1. With respect to regulation, allosterically activated by GTP. Inhibited by UTP. Its function is as follows. Catalyzes the reversible phosphorylation of UMP to UDP. In Streptococcus agalactiae serotype III (strain NEM316), this protein is Uridylate kinase.